Here is a 162-residue protein sequence, read N- to C-terminus: Probable chemoreceptor glutamine deamidase CheD (162 aa).

The protein belongs to the CheD family.

It carries out the reaction L-glutaminyl-[protein] + H2O = L-glutamyl-[protein] + NH4(+). Its function is as follows. Probably deamidates glutamine residues to glutamate on methyl-accepting chemotaxis receptors (MCPs), playing an important role in chemotaxis. This is Probable chemoreceptor glutamine deamidase CheD from Caldanaerobacter subterraneus subsp. tengcongensis (strain DSM 15242 / JCM 11007 / NBRC 100824 / MB4) (Thermoanaerobacter tengcongensis).